The following is a 98-amino-acid chain: uncharacterized protein (98 aa).

A compositionally biased stretch (basic residues) spans 1–10 (MARRRKPLHR). Residues 1–21 (MARRRKPLHRQRPEPPSWALR) are disordered.

This is an uncharacterized protein from Mycobacterium bovis (strain ATCC BAA-935 / AF2122/97).